Reading from the N-terminus, the 121-residue chain is Basic phospholipase A2 homolog AppP2 (121 aa).

Intrachain disulfides connect Cys26/Cys115, Cys28/Cys44, Cys43/Cys95, Cys49/Cys121, Cys50/Cys88, Cys57/Cys81, and Cys75/Cys86. Positions Lys105–Lys117 are important for membrane-damaging activities in eukaryotes and bacteria; heparin-binding.

Belongs to the phospholipase A2 family. Group II subfamily. K49 sub-subfamily. As to quaternary structure, monomer. In terms of tissue distribution, expressed by the venom gland.

It is found in the secreted. Snake venom phospholipase A2 (PLA2) that lacks enzymatic activity. Displays edema-inducing activities. Is myotoxic. A model of myotoxic mechanism has been proposed: an apo Lys49-PLA2 is activated by the entrance of a hydrophobic molecule (e.g. fatty acid) at the hydrophobic channel of the protein leading to a reorientation of a monomer. This reorientation causes a transition between 'inactive' to 'active' states, causing alignment of C-terminal and membrane-docking sites (MDoS) side-by-side and putting the membrane-disruption sites (MDiS) in the same plane, exposed to solvent and in a symmetric position for both monomers. The MDoS region stabilizes the toxin on membrane by the interaction of charged residues with phospholipid head groups. Subsequently, the MDiS region destabilizes the membrane with penetration of hydrophobic residues. This insertion causes a disorganization of the membrane, allowing an uncontrolled influx of ions (i.e. calcium and sodium), and eventually triggering irreversible intracellular alterations and cell death. This Agkistrodon piscivorus piscivorus (Eastern cottonmouth) protein is Basic phospholipase A2 homolog AppP2.